The chain runs to 121 residues: Large ribosomal subunit protein uL22 (121 aa).

It belongs to the universal ribosomal protein uL22 family. As to quaternary structure, part of the 50S ribosomal subunit.

Functionally, this protein binds specifically to 23S rRNA; its binding is stimulated by other ribosomal proteins, e.g. L4, L17, and L20. It is important during the early stages of 50S assembly. It makes multiple contacts with different domains of the 23S rRNA in the assembled 50S subunit and ribosome. Its function is as follows. The globular domain of the protein is located near the polypeptide exit tunnel on the outside of the subunit, while an extended beta-hairpin is found that lines the wall of the exit tunnel in the center of the 70S ribosome. This is Large ribosomal subunit protein uL22 from Paenarthrobacter aurescens (strain TC1).